Here is a 391-residue protein sequence, read N- to C-terminus: Succinate--CoA ligase [ADP-forming] subunit beta (391 aa).

The 240-residue stretch at 9 to 248 (KDILRKFGVS…TGEEDPFEVE (240 aa)) folds into the ATP-grasp domain. ATP contacts are provided by residues Lys-50, 57 to 59 (GRG), Glu-103, Met-106, and Glu-111. Mg(2+) contacts are provided by Asn-203 and Asp-217. Substrate is bound by residues Asn-268 and 325–327 (GIV).

Belongs to the succinate/malate CoA ligase beta subunit family. Heterotetramer of two alpha and two beta subunits. Mg(2+) is required as a cofactor.

It carries out the reaction succinate + ATP + CoA = succinyl-CoA + ADP + phosphate. The enzyme catalyses GTP + succinate + CoA = succinyl-CoA + GDP + phosphate. It participates in carbohydrate metabolism; tricarboxylic acid cycle; succinate from succinyl-CoA (ligase route): step 1/1. Functionally, succinyl-CoA synthetase functions in the citric acid cycle (TCA), coupling the hydrolysis of succinyl-CoA to the synthesis of either ATP or GTP and thus represents the only step of substrate-level phosphorylation in the TCA. The beta subunit provides nucleotide specificity of the enzyme and binds the substrate succinate, while the binding sites for coenzyme A and phosphate are found in the alpha subunit. The chain is Succinate--CoA ligase [ADP-forming] subunit beta from Chlorobium phaeobacteroides (strain BS1).